Reading from the N-terminus, the 613-residue chain is Chaperone protein DnaK (613 aa).

T173 carries the phosphothreonine; by autocatalysis modification. Residues 577–613 are disordered; the sequence is AKQAQAQQEGGAEGAQKADDNVVDAEYEEVNDDQEKK. Residues 597 to 613 are compositionally biased toward acidic residues; the sequence is NVVDAEYEEVNDDQEKK.

This sequence belongs to the heat shock protein 70 family.

Functionally, acts as a chaperone. The sequence is that of Chaperone protein DnaK from Bacillus pumilus (strain SAFR-032).